A 373-amino-acid polypeptide reads, in one-letter code: Chorismate synthase (373 aa).

Residues Arg48 and Arg54 each contribute to the NADP(+) site. FMN is bound by residues Arg125–Ser127, Asn248–Ala249, Gly288, Lys303–Ser307, and Arg329.

The protein belongs to the chorismate synthase family. In terms of assembly, homotetramer. Requires FMNH2 as cofactor.

It carries out the reaction 5-O-(1-carboxyvinyl)-3-phosphoshikimate = chorismate + phosphate. It functions in the pathway metabolic intermediate biosynthesis; chorismate biosynthesis; chorismate from D-erythrose 4-phosphate and phosphoenolpyruvate: step 7/7. Catalyzes the anti-1,4-elimination of the C-3 phosphate and the C-6 proR hydrogen from 5-enolpyruvylshikimate-3-phosphate (EPSP) to yield chorismate, which is the branch point compound that serves as the starting substrate for the three terminal pathways of aromatic amino acid biosynthesis. This reaction introduces a second double bond into the aromatic ring system. This is Chorismate synthase from Colwellia psychrerythraea (strain 34H / ATCC BAA-681) (Vibrio psychroerythus).